Here is a 147-residue protein sequence, read N- to C-terminus: UPF0047 protein sll1880 (147 aa).

Belongs to the UPF0047 family.

The chain is UPF0047 protein sll1880 from Synechocystis sp. (strain ATCC 27184 / PCC 6803 / Kazusa).